Reading from the N-terminus, the 171-residue chain is NADH-quinone oxidoreductase subunit C (171 aa).

It belongs to the complex I 30 kDa subunit family. NDH-1 is composed of 14 different subunits. Subunits NuoB, C, D, E, F, and G constitute the peripheral sector of the complex.

It is found in the cell membrane. The catalysed reaction is a quinone + NADH + 5 H(+)(in) = a quinol + NAD(+) + 4 H(+)(out). In terms of biological role, NDH-1 shuttles electrons from NADH, via FMN and iron-sulfur (Fe-S) centers, to quinones in the respiratory chain. The immediate electron acceptor for the enzyme in this species is believed to be ubiquinone. Couples the redox reaction to proton translocation (for every two electrons transferred, four hydrogen ions are translocated across the cytoplasmic membrane), and thus conserves the redox energy in a proton gradient. The sequence is that of NADH-quinone oxidoreductase subunit C from Herpetosiphon aurantiacus (strain ATCC 23779 / DSM 785 / 114-95).